Consider the following 433-residue polypeptide: Pyrimidine-nucleoside phosphorylase (433 aa).

81–83 lines the phosphate pocket; that stretch reads KHS. G88 and T90 together coordinate K(+). Phosphate-binding positions include T92, 108–110, and T120; that span reads KMS. Residues R168 and K187 each contribute to the substrate site. K(+) contacts are provided by L243, A246, and E255.

The protein belongs to the thymidine/pyrimidine-nucleoside phosphorylase family. Homodimer. K(+) is required as a cofactor.

It catalyses the reaction uridine + phosphate = alpha-D-ribose 1-phosphate + uracil. It carries out the reaction thymidine + phosphate = 2-deoxy-alpha-D-ribose 1-phosphate + thymine. The enzyme catalyses 2'-deoxyuridine + phosphate = 2-deoxy-alpha-D-ribose 1-phosphate + uracil. Catalyzes phosphorolysis of the pyrimidine nucleosides uridine, thymidine and 2'-deoxyuridine with the formation of the corresponding pyrimidine base and ribose-1-phosphate. The sequence is that of Pyrimidine-nucleoside phosphorylase (pdp) from Staphylococcus aureus (strain NCTC 8325 / PS 47).